A 268-amino-acid polypeptide reads, in one-letter code: Dioscorin DB3S (268 aa).

The 235-residue stretch at 25-259 (DEFSYIEGNP…TNFRSVFYFE (235 aa)) folds into the Alpha-carbonic anhydrase domain. An intrachain disulfide couples cysteine 50 to cysteine 209. Histidine 91 functions as the Proton acceptor in the catalytic mechanism. L-ascorbate contacts are provided by residues aspartate 92, 117 to 119 (HFH), glutamine 136, and 205 to 206 (TA).

Belongs to the alpha-class carbonic anhydrase family. In terms of assembly, monomer. Homodimer. In terms of processing, not glycosylated. Expressed in tuber (at protein level).

It carries out the reaction hydrogencarbonate + H(+) = CO2 + H2O. The catalysed reaction is 2 monodehydro-L-ascorbate radical + NADH + H(+) = 2 L-ascorbate + NAD(+). Its function is as follows. Storage protein of tuber. Involved in protection against oxidative stress. Has carbonate dehydratase and weak trypsin inhibitor activity detected by measuring the dehydration of sodium bicarbonate and the inhibition of trypsin-catalyzed hydrolysis of N-benzoyl-L-arginine-4-nitro anilide, respectively. Contrarily, no carbonate dehydratase or trypsin inhibitor activity detected by measuring the hydrolysis of 4-nitrophenyl acetate or the inhibition of bovine trypsin-catalyzed hydrolysis of N-benzoyl-L-arginine ethyl ester, respectively. Has dehydroascorbate (DHA) reductase and monodehydroascorbate (MDA) reductase activities. Catalyzes the reactions of carbonate dehydratase and DHA reductase independently of zinc and glutathione (GSH). The coupled reaction is capable of recycling a plant antioxidant ascorbate using ubiquitous compounds H(2)O and CO(2). Exhibits antioxidant activity. Able to scavenge 1,1-diphenyl-2-picrylhydrazyl (DPPH) radical and hydroxyl radicals. Exhibits immunomodulatory activity. Activates Toll-like receptor 4 signaling pathways by up-regulating the gene expression of pro-inflammatory cytokines, such as tumor necrosis factor alpha, interleukin-1 beta and interleukin-6, and chemokines RANTES and MCP-1, in mouse RAW 264.7 macrophages. Stimulates the phagocytosis of E.coli by the LPS-treated mouse macrophages. In Dioscorea polystachya (Chinese yam), this protein is Dioscorin DB3S.